A 130-amino-acid chain; its full sequence is Hypocretin neuropeptide precursor (130 aa).

The signal sequence occupies residues 1–32; that stretch reads MNFPSTKVPWAAVTLLLLLLLPPALLSLGVDA. Gln33 is modified (pyrrolidone carboxylic acid). Disulfide bonds link Cys38–Cys44 and Cys39–Cys46. The residue at position 65 (Leu65) is a Leucine amide. Position 96 is a methionine amide (Met96). Residues 97-130 constitute a propeptide that is removed on maturation; sequence GRRAGAELEPHPCSGRGCPTVTTTALAPRGGSGV.

This sequence belongs to the orexin family. Post-translationally, specific enzymatic cleavages at paired basic residues yield the different active peptides. In terms of tissue distribution, restricted to neuronal cell bodies of the dorsal and lateral hypothalamus.

The protein resides in the rough endoplasmic reticulum. It is found in the cytoplasmic vesicle. It localises to the synapse. In terms of biological role, neuropeptides that play a significant role in the regulation of food intake and sleep-wakefulness, possibly by coordinating the complex behavioral and physiologic responses of these complementary homeostatic functions. A broader role in the homeostatic regulation of energy metabolism, autonomic function, hormonal balance and the regulation of body fluids, is also suggested. Binds to orexin receptors HCRTR1/OX1R and HCRTR2/OX2R with a high affinity. Stimulates food intake. Modulates pituitary luteinizing hormone secretion in an ovarian steroid-dependent manner. Its function is as follows. Binds to orexin receptor HCRTR2/OX2R only. Stimulates food intake. Modulates pituitary luteinizing hormone secretion in an ovarian steroid-dependent manner. The protein is Hypocretin neuropeptide precursor (Hcrt) of Mus musculus (Mouse).